The sequence spans 360 residues: Glycerol-3-phosphate dehydrogenase [NAD(+)], cytoplasmic (360 aa).

NAD(+) contacts are provided by residues 11–16 (GSGNWG), phenylalanine 98, lysine 121, and alanine 155. Substrate is bound at residue lysine 121. The Proton acceptor role is filled by lysine 206. Arginine 270 and glutamine 299 together coordinate NAD(+). 270–271 (RN) lines the substrate pocket.

This sequence belongs to the NAD-dependent glycerol-3-phosphate dehydrogenase family. As to quaternary structure, homodimer.

The protein resides in the cytoplasm. The enzyme catalyses sn-glycerol 3-phosphate + NAD(+) = dihydroxyacetone phosphate + NADH + H(+). Its pathway is phospholipid metabolism; alpha-glycerophosphate cycle. The sequence is that of Glycerol-3-phosphate dehydrogenase [NAD(+)], cytoplasmic (Gpdh1) from Drosophila kanekoi (Fruit fly).